Consider the following 67-residue polypeptide: Large ribosomal subunit protein uL29 (67 aa).

This sequence belongs to the universal ribosomal protein uL29 family.

The chain is Large ribosomal subunit protein uL29 from Methanosarcina barkeri (strain Fusaro / DSM 804).